The primary structure comprises 438 residues: Na(+)/H(+) antiporter NhaA (438 aa).

Transmembrane regions (helical) follow at residues 23 to 43, 62 to 82, 104 to 124, 133 to 153, 162 to 182, 185 to 205, 212 to 232, 302 to 322, 337 to 357, 372 to 392, and 410 to 430; these read FGGI…NSFL, FFIG…LFFL, SFPV…YFFL, GFGI…MLLG, VFLI…IALF, TNLK…LAVL, SLIP…QSGI, FLAP…NAGV, LGVI…ITFI, WWHI…SMFI, and IAIL…LFVL.

Belongs to the NhaA Na(+)/H(+) (TC 2.A.33) antiporter family.

The protein localises to the cell inner membrane. It carries out the reaction Na(+)(in) + 2 H(+)(out) = Na(+)(out) + 2 H(+)(in). In terms of biological role, na(+)/H(+) antiporter that extrudes sodium in exchange for external protons. This is Na(+)/H(+) antiporter NhaA from Helicobacter pylori (strain G27).